The sequence spans 373 residues: DNA primase small subunit PriS (373 aa).

Catalysis depends on residues D95, D97, and D281.

This sequence belongs to the eukaryotic-type primase small subunit family. Heterodimer of a small subunit (PriS) and a large subunit (PriL). Requires Mg(2+) as cofactor. Mn(2+) is required as a cofactor.

Its function is as follows. Catalytic subunit of DNA primase, an RNA polymerase that catalyzes the synthesis of short RNA molecules used as primers for DNA polymerase during DNA replication. The small subunit contains the primase catalytic core and has DNA synthesis activity on its own. Binding to the large subunit stabilizes and modulates the activity, increasing the rate of DNA synthesis while decreasing the length of the DNA fragments, and conferring RNA synthesis capability. The DNA polymerase activity may enable DNA primase to also catalyze primer extension after primer synthesis. May also play a role in DNA repair. In Nitrosopumilus maritimus (strain SCM1), this protein is DNA primase small subunit PriS.